Consider the following 732-residue polypeptide: Glycine--tRNA ligase (732 aa).

Residues 1-27 (MRHVLSLVYKCSVFSKQVTVFSNHLRL) constitute a mitochondrion transit peptide. Positions 61 to 117 (ILAPLRANVKEQGDLVRKLKEEKAPEIDIKKAVAELKTRKKILEDKELSLAPAEDLF) constitute a WHEP-TRS domain. A glycine-binding site is contributed by Glu-297. Residues 329–331 (RNE) and 340–341 (RV) each bind ATP. Glu-348 contacts glycine. 453-454 (EC) lines the ATP pocket. 572 to 574 (EPS) lines the glycine pocket. Arg-579 contacts ATP.

The protein belongs to the class-II aminoacyl-tRNA synthetase family. In terms of assembly, homodimer.

It is found in the mitochondrion. Its subcellular location is the cytoplasm. It localises to the cell projection. The protein localises to the axon. The enzyme catalyses tRNA(Gly) + glycine + ATP = glycyl-tRNA(Gly) + AMP + diphosphate. It catalyses the reaction 2 ATP + H(+) = P(1),P(4)-bis(5'-adenosyl) tetraphosphate + diphosphate. Functionally, catalyzes the ATP-dependent ligation of glycine to the 3'-end of its cognate tRNA, via the formation of an aminoacyl-adenylate intermediate (Gly-AMP). Also produces diadenosine tetraphosphate (Ap4A), a universal pleiotropic signaling molecule needed for cell regulation pathways, by direct condensation of 2 ATPs. Thereby, may play a special role in Ap4A homeostasis. Required for terminal arborization of both dendrites and axons during development. This is Glycine--tRNA ligase from Bombyx mori (Silk moth).